The sequence spans 620 residues: Glutathione-regulated potassium-efflux system protein KefC (620 aa).

A run of 12 helical transmembrane segments spans residues 4–24 (HTLL…PIAV), 26–46 (LGLG…PWGL), 54–74 (SILH…GLEL), 90–110 (GALQ…FLGL), 114–134 (VAEL…MQAM), 149–169 (FAVL…IPLL), 178–198 (LGAF…VVLL), 218–238 (VFSA…EEVG), 270–290 (GLLL…GTLV), 294–314 (LRIL…LWLV), 327–347 (WFAV…GAAQ), and 359–379 (ALTL…VLLT). An RCK N-terminal domain is found at 399–518 (QPRVIVAGFG…AGVAMPERET (120 aa)). The disordered stretch occupies residues 599-620 (QGTAEGKHSGEAADEPEVKPSI).

It belongs to the monovalent cation:proton antiporter 2 (CPA2) transporter (TC 2.A.37) family. KefC subfamily. In terms of assembly, homodimer. Interacts with the regulatory subunit KefF.

It localises to the cell inner membrane. Pore-forming subunit of a potassium efflux system that confers protection against electrophiles. Catalyzes K(+)/H(+) antiport. This is Glutathione-regulated potassium-efflux system protein KefC from Salmonella choleraesuis (strain SC-B67).